Consider the following 191-residue polypeptide: tRNA-specific adenosine deaminase 2 (191 aa).

The CMP/dCMP-type deaminase domain maps to 20–145 (EETEKWMEQA…SVLDIASADL (126 aa)). A Zn(2+)-binding site is contributed by His-71. The Proton donor role is filled by Glu-73. Zn(2+) contacts are provided by Cys-107 and Cys-110.

This sequence belongs to the cytidine and deoxycytidylate deaminase family. ADAT2 subfamily. It depends on Zn(2+) as a cofactor.

The catalysed reaction is adenosine(34) in tRNA + H2O + H(+) = inosine(34) in tRNA + NH4(+). In terms of biological role, probably participates in deamination of adenosine-34 to inosine in many tRNAs. This Bos taurus (Bovine) protein is tRNA-specific adenosine deaminase 2 (DEADC1).